We begin with the raw amino-acid sequence, 301 residues long: tRNA uridine(34) hydroxylase (301 aa).

Residues 121–212 (NDKDTLVLDS…YLKNIKKKES (92 aa)) form the Rhodanese domain. Residue Cys172 is the Cysteine persulfide intermediate of the active site.

The protein belongs to the TrhO family.

It catalyses the reaction uridine(34) in tRNA + AH2 + O2 = 5-hydroxyuridine(34) in tRNA + A + H2O. Its function is as follows. Catalyzes oxygen-dependent 5-hydroxyuridine (ho5U) modification at position 34 in tRNAs. This Pelagibacter ubique (strain HTCC1062) protein is tRNA uridine(34) hydroxylase.